The primary structure comprises 382 residues: Na(+)/H(+) antiporter NhaA (382 aa).

Helical transmembrane passes span 14–34 (AGGI…NSSL), 49–69 (MSVS…LIGL), 87–107 (IFPA…YVAF), 117–137 (GWAI…ALLG), 146–166 (VFLL…IAFF), 171–191 (LSVL…LLNA), 205–225 (FILW…GVVL), 252–272 (VAFA…LEGV), 285–305 (VALG…YLAV), 321–341 (IFAV…ISSL), and 356–376 (LGIL…LSIS).

Belongs to the NhaA Na(+)/H(+) (TC 2.A.33) antiporter family.

The protein localises to the cell inner membrane. It carries out the reaction Na(+)(in) + 2 H(+)(out) = Na(+)(out) + 2 H(+)(in). Na(+)/H(+) antiporter that extrudes sodium in exchange for external protons. The protein is Na(+)/H(+) antiporter NhaA of Aliivibrio fischeri (strain ATCC 700601 / ES114) (Vibrio fischeri).